Here is a 600-residue protein sequence, read N- to C-terminus: NADH-quinone oxidoreductase subunit C/D (600 aa).

Residues Met-1–Gln-190 are NADH dehydrogenase I subunit C. Residues Asp-214–Arg-600 form an NADH dehydrogenase I subunit D region.

In the N-terminal section; belongs to the complex I 30 kDa subunit family. This sequence in the C-terminal section; belongs to the complex I 49 kDa subunit family. In terms of assembly, NDH-1 is composed of 13 different subunits. Subunits NuoB, CD, E, F, and G constitute the peripheral sector of the complex.

The protein localises to the cell inner membrane. The catalysed reaction is a quinone + NADH + 5 H(+)(in) = a quinol + NAD(+) + 4 H(+)(out). Its function is as follows. NDH-1 shuttles electrons from NADH, via FMN and iron-sulfur (Fe-S) centers, to quinones in the respiratory chain. The immediate electron acceptor for the enzyme in this species is believed to be ubiquinone. Couples the redox reaction to proton translocation (for every two electrons transferred, four hydrogen ions are translocated across the cytoplasmic membrane), and thus conserves the redox energy in a proton gradient. The protein is NADH-quinone oxidoreductase subunit C/D of Escherichia coli O127:H6 (strain E2348/69 / EPEC).